A 128-amino-acid chain; its full sequence is MKEVIAIIRPNTVSKTVKALDVVGFPAVTMAECFGRGKQKGYFSANLPEIVDIQKIIEEGEKEGRFIKYIPKRLISIVVDDADVPLVVGIISKVNRTGSFGDGRIFVLPVEEAIRVRTGETGEIAIGN.

This sequence belongs to the P(II) protein family.

In terms of biological role, could be involved in the regulation of nitrogen fixation. The polypeptide is Nitrogen fixation nifHD region GlnB-like protein 2 (glnBB) (Methanothermococcus thermolithotrophicus (Methanococcus thermolithotrophicus)).